We begin with the raw amino-acid sequence, 427 residues long: Indole diterpene prenyltransferase ptmD (427 aa).

77-78 (YV) contacts L-tryptophan. 9 residues coordinate substrate: R99, K186, Y188, R259, K261, Y263, Y344, Y409, and Y413.

This sequence belongs to the tryptophan dimethylallyltransferase family.

It functions in the pathway secondary metabolite biosynthesis. In terms of biological role, indole diterpene prenyltransferase; part of the gene cluster that mediates the biosynthesis of the indole diterpenes penitrems. The geranylgeranyl diphosphate (GGPP) synthase ptmG catalyzes the first step in penitrem biosynthesis via conversion of farnesyl pyrophosphate and isopentyl pyrophosphate into geranylgeranyl pyrophosphate (GGPP). Condensation of indole-3-glycerol phosphate with GGPP by the prenyl transferase ptmC then forms 3-geranylgeranylindole (3-GGI). Epoxidation by the FAD-dependent monooxygenase ptmM leads to a epoxidized-GGI that is substrate of the terpene cyclase ptmB for cyclization to yield paspaline. Paspaline is subsequently converted to 13-desoxypaxilline by the cytochrome P450 monooxygenase ptmP, the latter being then converted to paxilline by the cytochrome P450 monooxygenase ptmQ. Paxilline is converted to beta-paxitriol via C-10 ketoreduction by the short-chain dehydrogenase ptmH which can be monoprenylated at the C-20 by the indole diterpene prenyltransferase ptmD. A two-step elimination (acetylation and elimination) process performed by the O-acetyltransferase ptmV and ptmI leads to the production of the prenylated form of penijanthine. The FAD-linked oxidoreductase ptmO then converts the prenylated form of penijanthine into PC-M5 which is in turn transformed into PC-M4 by the aromatic dimethylallyltransferase ptmE. Five sequential oxidative transformations performed by the cytochrome P450 monooxygenases ptmK, ptmU, ptmL, ptmN and ptmJ yield the various penitrem compounds. PtmK, ptmU and ptmM are involved in the formation of the key bicyclic ring of penitrem C via the formation of the intermediates secopenitrem D and penitrem D. PtmL catalyzes the epoxidation of penitrem D and C to yield penitrem B and F, respectively. PtmJ catalyzes the last benzylic hydroxylation to convert penitrem B to prenitrem E and penitrem F to penitrem A. This Penicillium ochrochloron protein is Indole diterpene prenyltransferase ptmD.